Reading from the N-terminus, the 130-residue chain is Small ribosomal subunit protein uS8 (130 aa).

This sequence belongs to the universal ribosomal protein uS8 family. Part of the 30S ribosomal subunit.

Functionally, one of the primary rRNA binding proteins, it binds directly to 16S rRNA central domain where it helps coordinate assembly of the platform of the 30S subunit. The sequence is that of Small ribosomal subunit protein uS8 (rps8) from Methanocaldococcus jannaschii (strain ATCC 43067 / DSM 2661 / JAL-1 / JCM 10045 / NBRC 100440) (Methanococcus jannaschii).